Here is a 381-residue protein sequence, read N- to C-terminus: E3 ubiquitin-protein ligase At1g63170 (381 aa).

The tract at residues methionine 1–serine 23 is disordered. Transmembrane regions (helical) follow at residues valine 74–valine 94 and valine 107–tyrosine 127. The disordered stretch occupies residues arginine 135 to leucine 161. Positions proline 140–serine 152 are enriched in low complexity. Residues leucine 170–serine 194 adopt a coiled-coil conformation. Transmembrane regions (helical) follow at residues alanine 189–glycine 209, isoleucine 224–isoleucine 244, and glycine 245–glutamine 265. An RING-type; atypical zinc finger spans residues cysteine 325–lysine 366.

It is found in the membrane. The enzyme catalyses S-ubiquitinyl-[E2 ubiquitin-conjugating enzyme]-L-cysteine + [acceptor protein]-L-lysine = [E2 ubiquitin-conjugating enzyme]-L-cysteine + N(6)-ubiquitinyl-[acceptor protein]-L-lysine.. It participates in protein modification; protein ubiquitination. Functionally, mediates E2-dependent protein ubiquitination. The protein is E3 ubiquitin-protein ligase At1g63170 of Arabidopsis thaliana (Mouse-ear cress).